A 603-amino-acid polypeptide reads, in one-letter code: Zinc finger protein 415 (603 aa).

Residues 264–286 form a C2H2-type 1; degenerate zinc finger; the sequence is YRYIECDKALNHGSHMTVRQVSH. C2H2-type zinc fingers lie at residues 292-314, 320-342, 348-370, 376-398, 404-426, 432-454, 460-482, 488-510, 516-538, 544-566, and 572-594; these read YKCDLCGKVFSQKSNLARHWRVH, YKCNECDRSFSRNSCLALHRRVH, YKCYECDKVFSRNSCLALHQKTH, YTCKECGKAFSVRSTLTNHQVIH, YKCNECGKVFSQTSSLATHQRIH, YKCNECGKVFSQTSSLARHWRIH, YKCNECGKVFSYNSHLASHRRVH, YKCNECGKAFSVHSNLTTHQVIH, YKCNQCGKGFSVHSSLTTHQVIH, YKCNECGKSFSVRPNLTRHQIIH, and YKCSDCGKSFSVRPNLFRHQIIH.

As to expression, expressed in all tissues examined. Isoforms are differentially expressed. Isoform 3 and isoform 5 were highly expressed, isoform 4 moderately expressed, isoform 2 lower expression, the lowest expression level was seem with isoform 1.

Its subcellular location is the nucleus. The protein localises to the cytoplasm. Functionally, involved in transcriptional regulation. Transcriptional activity differed among the various isoforms. All isoforms except isoform 3 seem to suppresses the transcriptional activities of AP-1 and p53/TP53. This is Zinc finger protein 415 (ZNF415) from Homo sapiens (Human).